Consider the following 334-residue polypeptide: Probable peptidoglycan endopeptidase LytE (334 aa).

An N-terminal signal peptide occupies residues 1-25 (MKKQIITATTAVVLGSTLFAGAASA). 3 consecutive LysM domains span residues 26 to 69 (QSIK…TLSI), 86 to 129 (STYK…VLKL), and 149 to 192 (STYK…VLKV). Disordered stretches follow at residues 70 to 89 (NGKS…STYK), 131 to 153 (GSTS…TYKV), and 195 to 215 (TSTS…KTSS). Low complexity-rich tracts occupy residues 72–87 (KSTS…SSST) and 132–153 (STSS…TYKV). The NlpC/P60 domain maps to 217-334 (SLNVSKLVSD…KPRYLGAKRF (118 aa)). C247 (nucleophile) is an active-site residue. The active-site Proton acceptor is H296. Residue H308 is part of the active site.

It belongs to the peptidase C40 family.

It localises to the secreted. The protein localises to the cell wall. Its function is as follows. Cell wall hydrolase that cleaves gamma-D-glutamate-meso-diaminopimelate bonds in peptidoglycan. Seems to play a role in cell separation during vegetative growth. The protein is Probable peptidoglycan endopeptidase LytE (lytE) of Bacillus subtilis (strain 168).